The sequence spans 217 residues: Thiamine-phosphate synthase (217 aa).

4-amino-2-methyl-5-(diphosphooxymethyl)pyrimidine-binding positions include 39–43 (QYRDK) and N71. D72 and D91 together coordinate Mg(2+). T110 contacts 4-amino-2-methyl-5-(diphosphooxymethyl)pyrimidine. Residue 137–139 (SHT) participates in 2-[(2R,5Z)-2-carboxy-4-methylthiazol-5(2H)-ylidene]ethyl phosphate binding. Residue K140 coordinates 4-amino-2-methyl-5-(diphosphooxymethyl)pyrimidine. Residue G167 coordinates 2-[(2R,5Z)-2-carboxy-4-methylthiazol-5(2H)-ylidene]ethyl phosphate.

This sequence belongs to the thiamine-phosphate synthase family. Mg(2+) serves as cofactor.

It carries out the reaction 2-[(2R,5Z)-2-carboxy-4-methylthiazol-5(2H)-ylidene]ethyl phosphate + 4-amino-2-methyl-5-(diphosphooxymethyl)pyrimidine + 2 H(+) = thiamine phosphate + CO2 + diphosphate. The enzyme catalyses 2-(2-carboxy-4-methylthiazol-5-yl)ethyl phosphate + 4-amino-2-methyl-5-(diphosphooxymethyl)pyrimidine + 2 H(+) = thiamine phosphate + CO2 + diphosphate. It catalyses the reaction 4-methyl-5-(2-phosphooxyethyl)-thiazole + 4-amino-2-methyl-5-(diphosphooxymethyl)pyrimidine + H(+) = thiamine phosphate + diphosphate. It participates in cofactor biosynthesis; thiamine diphosphate biosynthesis; thiamine phosphate from 4-amino-2-methyl-5-diphosphomethylpyrimidine and 4-methyl-5-(2-phosphoethyl)-thiazole: step 1/1. Condenses 4-methyl-5-(beta-hydroxyethyl)thiazole monophosphate (THZ-P) and 2-methyl-4-amino-5-hydroxymethyl pyrimidine pyrophosphate (HMP-PP) to form thiamine monophosphate (TMP). This chain is Thiamine-phosphate synthase, found in Alcanivorax borkumensis (strain ATCC 700651 / DSM 11573 / NCIMB 13689 / SK2).